The primary structure comprises 601 residues: Uptake hydrogenase large subunit (601 aa).

Residues Cys-74, Cys-77, Cys-580, and Cys-583 each contribute to the Ni(2+) site.

The protein belongs to the [NiFe]/[NiFeSe] hydrogenase large subunit family. Heterodimer of a large and a small subunit. Ni(2+) serves as cofactor.

Its subcellular location is the cell membrane. The catalysed reaction is H2 + A = AH2. Functionally, this enzyme recycles the H(2) produced by nitrogenase to increase the production of ATP and to protect nitrogenase against inhibition or damage by O(2) under carbon- or phosphate-limited conditions. The sequence is that of Uptake hydrogenase large subunit (hupL) from Azotobacter chroococcum mcd 1.